We begin with the raw amino-acid sequence, 547 residues long: GMP synthase [glutamine-hydrolyzing] (547 aa).

Residues 12–210 (KILILDFGSQ…VLDIAGAKPD (199 aa)) enclose the Glutamine amidotransferase type-1 domain. The active-site Nucleophile is C89. Catalysis depends on residues H184 and E186. The region spanning 211 to 403 (WIMRDHIEEA…LGLPAEMVYR (193 aa)) is the GMPS ATP-PPase domain. 238–244 (SGGVDSS) provides a ligand contact to ATP.

In terms of assembly, homodimer.

It carries out the reaction XMP + L-glutamine + ATP + H2O = GMP + L-glutamate + AMP + diphosphate + 2 H(+). It participates in purine metabolism; GMP biosynthesis; GMP from XMP (L-Gln route): step 1/1. Catalyzes the synthesis of GMP from XMP. This is GMP synthase [glutamine-hydrolyzing] from Burkholderia pseudomallei (strain 1710b).